Reading from the N-terminus, the 180-residue chain is Large ribosomal subunit protein uL15 (180 aa).

The tract at residues 1-62 (MKKERLEQAS…KTAGRGSKGQ (62 aa)) is disordered.

Belongs to the universal ribosomal protein uL15 family. Part of the 50S ribosomal subunit.

In terms of biological role, binds to the 23S rRNA. The protein is Large ribosomal subunit protein uL15 of Leptospira interrogans serogroup Icterohaemorrhagiae serovar copenhageni (strain Fiocruz L1-130).